The following is a 267-amino-acid chain: MLSRILGVRNHSFRAFSTIGVCYNKSNTSPKKYLSPNEFASQKQVDEIEEQAYKQNLLNEEYKYDPKYLSENELNPISKRPIPLNVELLKYKPVQLPPTHGHEVAKIEFKGYDKDDLIRASEFAARAAFYLGIPCSKVQSLKTEKRLYTVIKSPFAQAKSKENFKRTTYGRKVYAYDATPEVVDLWLSFINKHAIEGVKYNALIHTRESLDFCEKLDALSADDMHMPDAYKGSDDPIANKVEELLKSDTFKKYFDEANIAESPKESK.

The transit peptide at M1–N10 directs the protein to the mitochondrion.

It belongs to the universal ribosomal protein uS10 family. Part of the mitochondrial small ribosomal subunit.

It localises to the mitochondrion. Its function is as follows. Involved in mitochondrial genome encoded proteins translation. Involved in the binding of tRNA to the ribosomes. This is Small ribosomal subunit protein uS10m (RSM10) from Debaryomyces hansenii (strain ATCC 36239 / CBS 767 / BCRC 21394 / JCM 1990 / NBRC 0083 / IGC 2968) (Yeast).